The following is a 1088-amino-acid chain: V-type proton ATPase catalytic subunit A (1088 aa).

257–264 (GAFGCGKT) lines the ATP pocket. One can recognise a DOD-type homing endonuclease domain in the interval 485-662 (LLGTWAGIGN…LVKIAHSLGI (178 aa)).

Belongs to the ATPase alpha/beta chains family. In terms of assembly, V-ATPase is a heteromultimeric enzyme composed of a peripheral catalytic V1 complex (components A to H) attached to an integral membrane V0 proton pore complex (components: a, c, c', c'', d, e, f and VOA1). In terms of processing, this protein undergoes a protein self splicing that involves a post-translational excision of the VDE intervening region (intein) followed by peptide ligation.

It is found in the vacuole membrane. It catalyses the reaction ATP + H2O + 4 H(+)(in) = ADP + phosphate + 5 H(+)(out). Functionally, catalytic subunit of the V1 complex of vacuolar(H+)-ATPase (V-ATPase), a multisubunit enzyme composed of a peripheral complex (V1) that hydrolyzes ATP and a membrane integral complex (V0) that translocates protons. V-ATPase is responsible for acidifying and maintaining the pH of intracellular compartments. Its function is as follows. VDE is an endonuclease that can cleave at a site present in a VMA1 allele that lacks the derived endonuclease segment of the open reading frame; cleavage at this site only occurs during meiosis and initiates 'homing', a genetic event that converts a VMA1 allele lacking VDE into one that contains it. The protein is V-type proton ATPase catalytic subunit A (VMA1) of Candida tropicalis (Yeast).